Consider the following 439-residue polypeptide: Membrane sensor protein UhpC (439 aa).

Over 1–25 (MLPFLKAPADAPLMTDKYEIDARYR) the chain is Cytoplasmic. The chain crosses the membrane as a helical span at residues 26 to 45 (YWRRHILLTIWLGYALFYFT). Topologically, residues 46–66 (RKSFNAAVPEILANGVLSRSD) are periplasmic. Residues 67–87 (IGLLATLFYITYGVSKFVSGI) form a helical membrane-spanning segment. Over 88–95 (VSDRSNAR) the chain is Cytoplasmic. The helical transmembrane segment at 96–118 (YFMGIGLIATGIINILFGFSTSL) threads the bilayer. Over 119-121 (WAF) the chain is Periplasmic. A helical transmembrane segment spans residues 122–144 (AVLWVLNAFFQGWGSPVCARLLT). At 145–162 (AWYSRTERGGWWALWNTA) the chain is on the cytoplasmic side. A helical transmembrane segment spans residues 163-183 (HNVGGALIPIVMAAAALHYGW). Residue Arg-184 is a topological domain, periplasmic. The chain crosses the membrane as a helical span at residues 185 to 205 (AGMMIAGCMAIVVGIFLCWRL). The Cytoplasmic portion of the chain corresponds to 206-244 (RDRPQALGLPAVGEWRHDALEIAQQQEGAGLTRKEILTK). A helical membrane pass occupies residues 245–265 (YVLLNPYIWLLSFCYVLVYVV). The Periplasmic portion of the chain corresponds to 266–289 (RAAINDWGNLYMSETLGVDLVTAN). A helical membrane pass occupies residues 290–310 (TAVTMFELGGFIGALVAGWGS). Residues 311 to 322 (DKLFNGNRGPMN) lie on the Cytoplasmic side of the membrane. A helical membrane pass occupies residues 323 to 343 (LIFAAGILLSVGSLWLMPFAS). The Periplasmic portion of the chain corresponds to 344 to 349 (YVMQAT). A helical transmembrane segment spans residues 350–370 (CFFTIGFFVFGPQMLIGMAAA). The Cytoplasmic segment spans residues 371–379 (ECSHKEAAG). Residues 380-400 (AATGFVGLFAYLGASLAGWPL) form a helical membrane-spanning segment. Topologically, residues 401–410 (AKVLDTWHWS) are periplasmic. A helical membrane pass occupies residues 411–431 (GFFVVISIAAGISALLLLPFL). The Cytoplasmic portion of the chain corresponds to 432 to 439 (NAQTPREA).

The protein belongs to the major facilitator superfamily. Organophosphate:Pi antiporter (OPA) (TC 2.A.1.4) family.

It localises to the cell inner membrane. In terms of biological role, part of the UhpABC signaling cascade that controls the expression of the hexose phosphate transporter UhpT. UhpC senses external glucose-6-phosphate and interacts with the histidine kinase UhpB, leading to the stimulation of the autokinase activity of UhpB. This Escherichia coli (strain K12) protein is Membrane sensor protein UhpC.